A 638-amino-acid polypeptide reads, in one-letter code: Probable ATP-binding protein YheS (638 aa).

2 consecutive ABC transporter domains span residues 2–246 and 313–531; these read IIFS…AQQT and VMIE…STSE. ATP is bound by residues 34–41 and 349–356; these read GKNGCGKS and GKNGAGKS. Residues 525-563 form a disordered region; the sequence is EQNSTSENKVSEKVGDNENSVQNRKEQKRREAELRQQTA. The span at 547–558 shows a compositional bias: basic and acidic residues; the sequence is NRKEQKRREAEL.

Belongs to the ABC transporter superfamily. ABCF family. YheS subfamily.

Its function is as follows. Genetic data indicate it may be involved in ribosome assembly or function. The chain is Probable ATP-binding protein YheS from Haemophilus influenzae (strain ATCC 51907 / DSM 11121 / KW20 / Rd).